A 432-amino-acid chain; its full sequence is UDP-N-acetylglucosamine 1-carboxyvinyltransferase (432 aa).

22-23 (KN) serves as a coordination point for phosphoenolpyruvate. Arg96 is a binding site for UDP-N-acetyl-alpha-D-glucosamine. The Proton donor role is filled by Cys120. At Cys120 the chain carries 2-(S-cysteinyl)pyruvic acid O-phosphothioketal. UDP-N-acetyl-alpha-D-glucosamine is bound by residues 125-129 (RPVDL), Asp310, and Ile332.

It belongs to the EPSP synthase family. MurA subfamily.

It localises to the cytoplasm. The catalysed reaction is phosphoenolpyruvate + UDP-N-acetyl-alpha-D-glucosamine = UDP-N-acetyl-3-O-(1-carboxyvinyl)-alpha-D-glucosamine + phosphate. It participates in cell wall biogenesis; peptidoglycan biosynthesis. Cell wall formation. Adds enolpyruvyl to UDP-N-acetylglucosamine. This chain is UDP-N-acetylglucosamine 1-carboxyvinyltransferase, found in Caulobacter sp. (strain K31).